Consider the following 832-residue polypeptide: Ventricular zone-expressed PH domain-containing protein homolog 1 (832 aa).

Residues alanine 201 to methionine 319 form an interaction with TGFBR1 region. The segment at aspartate 497 to glutamate 519 is disordered. The span at histidine 499–histidine 510 shows a compositional bias: polar residues. Residues glutamate 663–leucine 832 form an interaction with TGFBR1 region. Residues glutamine 716–alanine 818 form the PH domain.

It belongs to the MELT/VEPH family. Interacts with TGFBR1.

The protein localises to the cell membrane. Interacts with TGF-beta receptor type-1 (TGFBR1) and inhibits dissociation of activated SMAD2 from TGFBR1, impeding its nuclear accumulation and resulting in impaired TGF-beta signaling. May also affect FOXO, Hippo and Wnt signaling. This Rattus norvegicus (Rat) protein is Ventricular zone-expressed PH domain-containing protein homolog 1 (Veph1).